A 363-amino-acid polypeptide reads, in one-letter code: Histidinol-phosphate aminotransferase (363 aa).

Residue Lys-227 is modified to N6-(pyridoxal phosphate)lysine.

Belongs to the class-II pyridoxal-phosphate-dependent aminotransferase family. Histidinol-phosphate aminotransferase subfamily. Homodimer. Pyridoxal 5'-phosphate is required as a cofactor.

It catalyses the reaction L-histidinol phosphate + 2-oxoglutarate = 3-(imidazol-4-yl)-2-oxopropyl phosphate + L-glutamate. The protein operates within amino-acid biosynthesis; L-histidine biosynthesis; L-histidine from 5-phospho-alpha-D-ribose 1-diphosphate: step 7/9. The sequence is that of Histidinol-phosphate aminotransferase from Akkermansia muciniphila (strain ATCC BAA-835 / DSM 22959 / JCM 33894 / BCRC 81048 / CCUG 64013 / CIP 107961 / Muc).